Reading from the N-terminus, the 424-residue chain is Gamma-glutamyl phosphate reductase (424 aa).

The protein belongs to the gamma-glutamyl phosphate reductase family.

The protein localises to the cytoplasm. It carries out the reaction L-glutamate 5-semialdehyde + phosphate + NADP(+) = L-glutamyl 5-phosphate + NADPH + H(+). It functions in the pathway amino-acid biosynthesis; L-proline biosynthesis; L-glutamate 5-semialdehyde from L-glutamate: step 2/2. In terms of biological role, catalyzes the NADPH-dependent reduction of L-glutamate 5-phosphate into L-glutamate 5-semialdehyde and phosphate. The product spontaneously undergoes cyclization to form 1-pyrroline-5-carboxylate. This Halorhodospira halophila (strain DSM 244 / SL1) (Ectothiorhodospira halophila (strain DSM 244 / SL1)) protein is Gamma-glutamyl phosphate reductase.